A 356-amino-acid polypeptide reads, in one-letter code: 7,8-didemethyl-8-hydroxy-5-deazariboflavin synthase (356 aa).

Residues Ile-40 to Asn-280 enclose the Radical SAM core domain. 3 residues coordinate [4Fe-4S] cluster: Cys-54, Cys-58, and Cys-61.

This sequence belongs to the radical SAM superfamily. CofG family. In terms of assembly, consists of two subunits, CofG and CofH. It depends on [4Fe-4S] cluster as a cofactor.

It carries out the reaction 5-amino-5-(4-hydroxybenzyl)-6-(D-ribitylimino)-5,6-dihydrouracil + S-adenosyl-L-methionine = 7,8-didemethyl-8-hydroxy-5-deazariboflavin + 5'-deoxyadenosine + L-methionine + NH4(+) + H(+). The protein operates within cofactor biosynthesis; coenzyme F0 biosynthesis. In terms of biological role, catalyzes the radical-mediated synthesis of 7,8-didemethyl-8-hydroxy-5-deazariboflavin from 5-amino-5-(4-hydroxybenzyl)-6-(D-ribitylimino)-5,6-dihydrouracil. This Methanococcus aeolicus (strain ATCC BAA-1280 / DSM 17508 / OCM 812 / Nankai-3) protein is 7,8-didemethyl-8-hydroxy-5-deazariboflavin synthase.